A 363-amino-acid chain; its full sequence is UDP-N-acetylglucosamine--N-acetylmuramyl-(pentapeptide) pyrophosphoryl-undecaprenol N-acetylglucosamine transferase (363 aa).

Residues 10–12 (TGG), Asn124, Ser195, Ile250, and Gln295 each bind UDP-N-acetyl-alpha-D-glucosamine.

The protein belongs to the glycosyltransferase 28 family. MurG subfamily.

Its subcellular location is the cell membrane. The catalysed reaction is di-trans,octa-cis-undecaprenyl diphospho-N-acetyl-alpha-D-muramoyl-L-alanyl-D-glutamyl-meso-2,6-diaminopimeloyl-D-alanyl-D-alanine + UDP-N-acetyl-alpha-D-glucosamine = di-trans,octa-cis-undecaprenyl diphospho-[N-acetyl-alpha-D-glucosaminyl-(1-&gt;4)]-N-acetyl-alpha-D-muramoyl-L-alanyl-D-glutamyl-meso-2,6-diaminopimeloyl-D-alanyl-D-alanine + UDP + H(+). It participates in cell wall biogenesis; peptidoglycan biosynthesis. In terms of biological role, cell wall formation. Catalyzes the transfer of a GlcNAc subunit on undecaprenyl-pyrophosphoryl-MurNAc-pentapeptide (lipid intermediate I) to form undecaprenyl-pyrophosphoryl-MurNAc-(pentapeptide)GlcNAc (lipid intermediate II). The polypeptide is UDP-N-acetylglucosamine--N-acetylmuramyl-(pentapeptide) pyrophosphoryl-undecaprenol N-acetylglucosamine transferase (Listeria monocytogenes serovar 1/2a (strain ATCC BAA-679 / EGD-e)).